A 98-amino-acid polypeptide reads, in one-letter code: Plastocyanin (98 aa).

Residues 1 to 98 form the Plastocyanin-like domain; that stretch reads AQIVKLGGDD…AGMKMTITVQ (98 aa). The Cu cation site is built by His-38, Cys-83, His-86, and Met-91.

It belongs to the plastocyanin family. Cu(2+) serves as cofactor.

The protein resides in the plastid. The protein localises to the chloroplast thylakoid membrane. Functionally, participates in electron transfer between P700 and the cytochrome b6-f complex in photosystem I. This chain is Plastocyanin (PETE), found in Ulva arasakii (Sea lettuce).